Here is a 1377-residue protein sequence, read N- to C-terminus: Carboxypeptidase D (1377 aa).

Positions 1–37 (MASGRDERPPWRLGRLRLLPPPPLLLLLLLLRSSAQA) are cleaved as a signal peptide. The Extracellular portion of the chain corresponds to 38–1296 (AHIKKAEATT…DNRIFGLPRE (1259 aa)). The Peptidase M14 1 domain maps to 62-379 (HYYHEAALGE…ESLITLIEKV (318 aa)). Residues H138 and E141 each contribute to the Zn(2+) site. The Cell attachment site signature appears at 161 to 163 (RGD). N171 and N216 each carry an N-linked (GlcNAc...) asparagine glycan. Residues 188–231 (RAREGDCGLGDSGPPGTSGRDNSRGRDLNRSFPDQFSTGEPPSL) are disordered. Residue H256 coordinates Zn(2+). Residue Y264 is modified to Phosphotyrosine. The residue at position 269 (S269) is a Phosphoserine. Catalysis depends on E349, which acts as the Proton donor/acceptor. N-linked (GlcNAc...) asparagine glycans are attached at residues N398, N409, N428, and N521. Positions 501–791 (HHHHFPDMEI…RSLIQFMKQV (291 aa)) constitute a Peptidase M14 2 domain. Zn(2+) contacts are provided by H563 and E566. Residue N625 is glycosylated (N-linked (GlcNAc...) asparagine). Residue H670 coordinates Zn(2+). E761 serves as the catalytic Proton donor/acceptor. N810, N854, N866, N878, N952, and N975 each carry an N-linked (GlcNAc...) asparagine glycan. The interval 874 to 898 (ADANNESKKGRGHSTSTDDTSDPTS) is disordered. Positions 929–1208 (RYHSYKDLSE…KSLLSMLVEV (280 aa)) constitute a Peptidase M14 3 domain. The span at 1038–1047 (RERAQEKDCT) shows a compositional bias: basic and acidic residues. Positions 1038 to 1064 (RERAQEKDCTSKTGHTNAHGKDLDTDF) are disordered. Residues N1067 and N1139 are each glycosylated (N-linked (GlcNAc...) asparagine). A helical transmembrane segment spans residues 1297–1317 (LVVTVSGATMSALILTACIIW). S-palmitoyl cysteine attachment occurs at residues C1314, C1318, and C1320. The Cytoplasmic portion of the chain corresponds to 1318–1377 (CICSIKSNRHKDGFHRLRQHHDEYEDEIRMMSTGSKKSLLSHEFQDETDTEEETLYSSKH). A phosphoserine mark is found at S1355 and S1358. The disordered stretch occupies residues 1356–1377 (LLSHEFQDETDTEEETLYSSKH). Phosphothreonine is present on residues T1365 and T1367.

It belongs to the peptidase M14 family. Zn(2+) serves as cofactor.

Its subcellular location is the cell membrane. It catalyses the reaction Releases C-terminal Arg and Lys from polypeptides.. The protein is Carboxypeptidase D (Cpd) of Mus musculus (Mouse).